Reading from the N-terminus, the 367-residue chain is Uroporphyrinogen decarboxylase (367 aa).

An N-acetylmethionine modification is found at Met-1. The coproporphyrinogen I site is built by Arg-37, Ala-39, Arg-41, Arg-50, Asp-86, Tyr-164, Ser-219, and His-339. Coproporphyrinogen III is bound by residues Arg-37, Ala-39, and Arg-41. 4 residues coordinate coproporphyrinogen III: Asp-86, Tyr-164, Ser-219, and His-339.

This sequence belongs to the uroporphyrinogen decarboxylase family. As to quaternary structure, homodimer.

Its subcellular location is the cytoplasm. It localises to the cytosol. It catalyses the reaction uroporphyrinogen III + 4 H(+) = coproporphyrinogen III + 4 CO2. The enzyme catalyses uroporphyrinogen I + 4 H(+) = coproporphyrinogen I + 4 CO2. It participates in porphyrin-containing compound metabolism; protoporphyrin-IX biosynthesis; coproporphyrinogen-III from 5-aminolevulinate: step 4/4. Catalyzes the sequential decarboxylation of the four acetate side chains of uroporphyrinogen to form coproporphyrinogen and participates in the fifth step in the heme biosynthetic pathway. Isomer I or isomer III of uroporphyrinogen may serve as substrate, but only coproporphyrinogen III can ultimately be converted to heme. In vitro also decarboxylates pentacarboxylate porphyrinogen I. The chain is Uroporphyrinogen decarboxylase from Ovis aries (Sheep).